Reading from the N-terminus, the 1211-residue chain is DNA polymerase beta (1211 aa).

4 consecutive repeat copies span residues 1074-1077 (KPAG), 1078-1081 (KPAG), 1082-1085 (NPAG), and 1086-1089 (NPAG). Residues 1074–1089 (KPAGKPAGNPAGNPAG) form a 4 X 4 AA tandem repeats of [NK]-[P]-A-G region.

It belongs to the DNA polymerase type-B family.

The catalysed reaction is DNA(n) + a 2'-deoxyribonucleoside 5'-triphosphate = DNA(n+1) + diphosphate. Functionally, DNA-directed DNA polymerase involved in viral DNA replication. This African swine fever virus (strain Badajoz 1971 Vero-adapted) (Ba71V) protein is DNA polymerase beta (DPOL).